Reading from the N-terminus, the 175-residue chain is ATP synthase subunit delta (175 aa).

Belongs to the ATPase delta chain family. F-type ATPases have 2 components, F(1) - the catalytic core - and F(0) - the membrane proton channel. F(1) has five subunits: alpha(3), beta(3), gamma(1), delta(1), epsilon(1). F(0) has three main subunits: a(1), b(2) and c(10-14). The alpha and beta chains form an alternating ring which encloses part of the gamma chain. F(1) is attached to F(0) by a central stalk formed by the gamma and epsilon chains, while a peripheral stalk is formed by the delta and b chains.

Its subcellular location is the cell inner membrane. F(1)F(0) ATP synthase produces ATP from ADP in the presence of a proton or sodium gradient. F-type ATPases consist of two structural domains, F(1) containing the extramembraneous catalytic core and F(0) containing the membrane proton channel, linked together by a central stalk and a peripheral stalk. During catalysis, ATP synthesis in the catalytic domain of F(1) is coupled via a rotary mechanism of the central stalk subunits to proton translocation. Functionally, this protein is part of the stalk that links CF(0) to CF(1). It either transmits conformational changes from CF(0) to CF(1) or is implicated in proton conduction. The protein is ATP synthase subunit delta of Xanthomonas campestris pv. campestris (strain 8004).